We begin with the raw amino-acid sequence, 149 residues long: D-aminoacyl-tRNA deacylase (149 aa).

The Gly-cisPro motif, important for rejection of L-amino acids motif lies at G137–P138.

It belongs to the DTD family. As to quaternary structure, homodimer.

The protein resides in the cytoplasm. It catalyses the reaction glycyl-tRNA(Ala) + H2O = tRNA(Ala) + glycine + H(+). The enzyme catalyses a D-aminoacyl-tRNA + H2O = a tRNA + a D-alpha-amino acid + H(+). In terms of biological role, an aminoacyl-tRNA editing enzyme that deacylates mischarged D-aminoacyl-tRNAs. Also deacylates mischarged glycyl-tRNA(Ala), protecting cells against glycine mischarging by AlaRS. Acts via tRNA-based rather than protein-based catalysis; rejects L-amino acids rather than detecting D-amino acids in the active site. By recycling D-aminoacyl-tRNA to D-amino acids and free tRNA molecules, this enzyme counteracts the toxicity associated with the formation of D-aminoacyl-tRNA entities in vivo and helps enforce protein L-homochirality. In Geobacter sp. (strain M21), this protein is D-aminoacyl-tRNA deacylase.